Here is a 175-residue protein sequence, read N- to C-terminus: Ferritin light chain (175 aa).

The residue at position 2 (Ser2) is an N-acetylserine. Positions 7–156 (QNYSTEVEAA…DHLTNLRRLA (150 aa)) constitute a Ferritin-like diiron domain. Fe cation is bound by residues Glu54, Glu57, Glu58, Glu61, and Glu64.

The protein belongs to the ferritin family. Oligomer of 24 subunits. There are two types of subunits: L (light) chain and H (heavy) chain. The major chain can be light or heavy, depending on the species and tissue type. The functional molecule forms a roughly spherical shell with a diameter of 12 nm and contains a central cavity into which the insoluble mineral iron core is deposited. Interacts with NCOA4.

The protein localises to the cytoplasmic vesicle. Its subcellular location is the autophagosome. The protein resides in the cytoplasm. It is found in the autolysosome. Stores iron in a soluble, non-toxic, readily available form. Important for iron homeostasis. Iron is taken up in the ferrous form and deposited as ferric hydroxides after oxidation. Also plays a role in delivery of iron to cells. Mediates iron uptake in capsule cells of the developing kidney. Delivery to lysosomes by the cargo receptor NCOA4 for autophagic degradation and release or iron. This chain is Ferritin light chain (FTL), found in Canis lupus familiaris (Dog).